The chain runs to 202 residues: MVPQGCSLVWVSALYVSVIASLHIINNENSVFIATHSETELRHWLIFVKMAQRNGTAWWRMASVPINAYFERDIAFLFNPRCVIETAMGSKILCRYNKNIGVVFVDNDTKCNVSFPSGVQLQLLNQSVMESIRTKTYVVDYARKTTERGDCFISVAFCRKERRRFLSRCERFVYYCISVYLFAVVVLCSCWFALDPLFNMWA.

Residues 1 to 20 (MVPQGCSLVWVSALYVSVIA) form the signal peptide. 4 N-linked (GlcNAc...) asparagine; by host glycosylation sites follow: Asn-54, Asn-107, Asn-112, and Asn-125. A helical membrane pass occupies residues 172 to 192 (FVYYCISVYLFAVVVLCSCWF).

The protein resides in the membrane. The sequence is that of Glycoprotein U22 (U22) from Homo sapiens (Human).